The primary structure comprises 358 residues: Flap endonuclease 1 (358 aa).

An N-domain region spans residues 1–103; that stretch reads MGIKRLSKLI…HEFEKRTKRR (103 aa). D34 provides a ligand contact to Mg(2+). R47 and R69 together coordinate DNA. 5 residues coordinate Mg(2+): D85, E157, E159, D178, and D180. Positions 121 to 252 are I-domain; sequence LVSKYDRMNV…KRAFEYIKKY (132 aa). E157 is a binding site for DNA. 2 residues coordinate DNA: G230 and D232. Mg(2+) is bound at residue D232. The interaction with PCNA stretch occupies residues 346–354; the sequence is KQTRIDSFF.

Belongs to the XPG/RAD2 endonuclease family. FEN1 subfamily. In terms of assembly, interacts with PCNA. Three molecules of FEN1 bind to one PCNA trimer with each molecule binding to one PCNA monomer. PCNA stimulates the nuclease activity without altering cleavage specificity. It depends on Mg(2+) as a cofactor. Post-translationally, phosphorylated. Phosphorylation upon DNA damage induces relocalization to the nuclear plasma.

Its subcellular location is the nucleus. It is found in the nucleolus. The protein resides in the nucleoplasm. The protein localises to the mitochondrion. Functionally, structure-specific nuclease with 5'-flap endonuclease and 5'-3' exonuclease activities involved in DNA replication and repair. During DNA replication, cleaves the 5'-overhanging flap structure that is generated by displacement synthesis when DNA polymerase encounters the 5'-end of a downstream Okazaki fragment. It enters the flap from the 5'-end and then tracks to cleave the flap base, leaving a nick for ligation. Also involved in the long patch base excision repair (LP-BER) pathway, by cleaving within the apurinic/apyrimidinic (AP) site-terminated flap. Acts as a genome stabilization factor that prevents flaps from equilibrating into structures that lead to duplications and deletions. Also possesses 5'-3' exonuclease activity on nicked or gapped double-stranded DNA, and exhibits RNase H activity. Also involved in replication and repair of rDNA and in repairing mitochondrial DNA. This Enterocytozoon bieneusi (strain H348) (Microsporidian parasite) protein is Flap endonuclease 1.